The chain runs to 489 residues: Coronin-1B (489 aa).

Serine 2 carries the phosphoserine; by PKC modification. 6 WD repeats span residues 18–72, 73–122, 123–166, 167–210, 211–256, and 257–296; these read QPVK…GRID, KAYP…SPLT, EPVV…GTAE, ELYR…RGTL, VAER…ENLE, and EPMA…RYFE. The segment at 408–444 is disordered; that stretch reads RRNVLSDSRPAMAPGSSHLGAPASTTTAADATPSGSL. Residues 428–441 show a composition bias toward low complexity; sequence APASTTTAADATPS. A coiled-coil region spans residues 449–474; it reads EAGKLEEVMQELRALRALVKEQGDRI.

It belongs to the WD repeat coronin family. Forms homooligomers, but does not form complexes with the other coronins. Interacts with Arp2/3 complex components, including ACTR2, ARPC1B and ARPC2. Binds actin. Post-translationally, phosphorylation by PKC on Ser-2 regulates the interaction with the Arp2/3 complex and cell motility in fibroblasts. Phosphorylation does not seem to affect subcellular location.

It is found in the cytoplasm. The protein localises to the cytoskeleton. The protein resides in the stress fiber. Regulates leading edge dynamics and cell motility in fibroblasts. May be involved in cytokinesis and signal transduction. This chain is Coronin-1B (CORO1B), found in Homo sapiens (Human).